A 225-amino-acid polypeptide reads, in one-letter code: Non-structural protein V (225 aa).

The nuclear localization signal stretch occupies residues 65-72 (PVKPRRKK). Polar residues predominate over residues 145-157 (SNEPVSSAGSAQD). The segment at 145–173 (SNEPVSSAGSAQDPNFKRGGANRERARGN) is disordered. 8 residues coordinate Zn(2+): His174, Cys193, Cys197, Cys209, Cys211, Cys214, Cys218, and Cys221.

It belongs to the paramyxoviruses V protein family. As to quaternary structure, interacts with host IFIH1/MDA5 and DHX58/LGP2. Forms with host DDB1, CUL4A, STAT1 and STAT2 the HPIV2 virus V-dependent complex (VDC); this complex targets host STAT2 to proteasomal degradation.

The protein localises to the host nucleus. Plays an essential role in the inhibition of host immune response. Prevents the establishment of cellular antiviral state by blocking interferon-alpha/beta (IFN-alpha/beta) production and signaling pathway. Interacts with host IFIH1/MDA5 and DHX58/LGP2 to inhibit the transduction pathway involved in the activation of IFN-beta promoter, thus protecting the virus against cell antiviral state. Efficiently blocks type I IFN signaling following infection by targeting host STAT2 for proteasomal degradation. Also plays a role in viral growth by promoting host RhoA-induced F-actin formation. This Homo sapiens (Human) protein is Non-structural protein V (P/V).